The sequence spans 194 residues: Ribonuclease HII (194 aa).

The RNase H type-2 domain occupies 3–193 (ILTAGVDEAG…VRNLFAQQAL (191 aa)). A divalent metal cation-binding residues include Asp9, Glu10, and Asp101.

Belongs to the RNase HII family. Mn(2+) serves as cofactor. Mg(2+) is required as a cofactor.

The protein localises to the cytoplasm. The catalysed reaction is Endonucleolytic cleavage to 5'-phosphomonoester.. Its function is as follows. Endonuclease that specifically degrades the RNA of RNA-DNA hybrids. The sequence is that of Ribonuclease HII from Neisseria meningitidis serogroup C / serotype 2a (strain ATCC 700532 / DSM 15464 / FAM18).